The primary structure comprises 116 residues: Large ribosomal subunit protein bL17 (116 aa).

This sequence belongs to the bacterial ribosomal protein bL17 family. In terms of assembly, part of the 50S ribosomal subunit. Contacts protein L32.

The chain is Large ribosomal subunit protein bL17 from Prochlorococcus marinus (strain SARG / CCMP1375 / SS120).